The primary structure comprises 245 residues: Probable transcriptional regulatory protein SUN_1622 (245 aa).

This sequence belongs to the TACO1 family.

The protein localises to the cytoplasm. The sequence is that of Probable transcriptional regulatory protein SUN_1622 from Sulfurovum sp. (strain NBC37-1).